The primary structure comprises 213 residues: Imidazole glycerol phosphate synthase subunit HisH 1 (213 aa).

The Glutamine amidotransferase type-1 domain occupies Thr4–Trp213. Residue Cys82 is the Nucleophile of the active site. Active-site residues include His191 and Glu193.

As to quaternary structure, heterodimer of HisH and HisF.

It localises to the cytoplasm. It catalyses the reaction 5-[(5-phospho-1-deoxy-D-ribulos-1-ylimino)methylamino]-1-(5-phospho-beta-D-ribosyl)imidazole-4-carboxamide + L-glutamine = D-erythro-1-(imidazol-4-yl)glycerol 3-phosphate + 5-amino-1-(5-phospho-beta-D-ribosyl)imidazole-4-carboxamide + L-glutamate + H(+). It carries out the reaction L-glutamine + H2O = L-glutamate + NH4(+). The protein operates within amino-acid biosynthesis; L-histidine biosynthesis; L-histidine from 5-phospho-alpha-D-ribose 1-diphosphate: step 5/9. IGPS catalyzes the conversion of PRFAR and glutamine to IGP, AICAR and glutamate. The HisH subunit provides the glutamine amidotransferase activity that produces the ammonia necessary to HisF for the synthesis of IGP and AICAR. This is Imidazole glycerol phosphate synthase subunit HisH 1 (hisH1) from Pseudomonas aeruginosa (strain ATCC 15692 / DSM 22644 / CIP 104116 / JCM 14847 / LMG 12228 / 1C / PRS 101 / PAO1).